Reading from the N-terminus, the 404-residue chain is F-box only protein 12 (404 aa).

Positions Met1–Leu44 constitute an F-box domain. Residues Leu383–Val403 form a helical membrane-spanning segment.

It localises to the membrane. The polypeptide is F-box only protein 12 (FBX12) (Arabidopsis thaliana (Mouse-ear cress)).